A 261-amino-acid chain; its full sequence is MTQPFIAVIPARLASTRLPNKPLADLGGKPMVVRVAERAREAGAQQVLVASDAQSVLDAARDHGFEAVLTRADHPSGTDRLAEVAATLGWSDDTVVVNVQGDEPLIDPVLVRDVASHLAAHPACAIATAAHPIHDAADVFNPNVVKVALDAQSVALYFSRAPIPWSRDAYQPHWPDVAAMPAPAFPVYRHIGLYAYRARFLRTYPTLAQAPIEQAEQLEQLRALWHGERIAVLITESAPEAGIDTPADLARVQALFQPSSK.

It belongs to the KdsB family.

It is found in the cytoplasm. The catalysed reaction is 3-deoxy-alpha-D-manno-oct-2-ulosonate + CTP = CMP-3-deoxy-beta-D-manno-octulosonate + diphosphate. It functions in the pathway nucleotide-sugar biosynthesis; CMP-3-deoxy-D-manno-octulosonate biosynthesis; CMP-3-deoxy-D-manno-octulosonate from 3-deoxy-D-manno-octulosonate and CTP: step 1/1. Its pathway is bacterial outer membrane biogenesis; lipopolysaccharide biosynthesis. Its function is as follows. Activates KDO (a required 8-carbon sugar) for incorporation into bacterial lipopolysaccharide in Gram-negative bacteria. The chain is 3-deoxy-manno-octulosonate cytidylyltransferase 1 from Burkholderia lata (strain ATCC 17760 / DSM 23089 / LMG 22485 / NCIMB 9086 / R18194 / 383).